A 2144-amino-acid chain; its full sequence is HEAT repeat-containing protein 1 (2144 aa).

Position 1 is an N-acetylmethionine (M1). Position 2 is an N-acetylthreonine; in HEAT repeat-containing protein 1, N-terminally processed (T2). Position 516 is a phosphoserine (S516). An HEAT 1 repeat occupies 913–951 (ASISSPVVTSLLINLGSPVKEVRRAAIQCLQALSGVASP). The tract at residues 1170-1191 (KAKPLGTVQQKRRQKMQQKKSQ) is disordered. Residue S1190 is modified to Phosphoserine. Residues 1347–1385 (NKTVKMVIPALIQSDSGDSIEVSRNVEEIVVKIISVFVD) form an HEAT 2 repeat. S1492 is subject to Phosphoserine. 3 HEAT repeats span residues 1594-1632 (LLPTETFIPVIRGLVGNPLPSVRRKALDLLNNKLQQNIS), 1730-1770 (IPQL…VVET), and 2100-2138 (IVLLPESIPFLAELMEDECEEVEHQCQKTIQQLETVLGE).

It belongs to the HEATR1/UTP10 family. In terms of assembly, part of the small subunit (SSU) processome, composed of more than 70 proteins and the RNA chaperone small nucleolar RNA (snoRNA) U3. Interacts with MYC; the interaction is required for localization of MYC to the nucleolus.

The protein localises to the nucleus. Its subcellular location is the nucleolus. In terms of biological role, ribosome biogenesis factor; required for recruitment of Myc to nucleoli. Involved in nucleolar processing of pre-18S ribosomal RNA. Required for optimal pre-ribosomal RNA transcription by RNA polymerase I. Part of the small subunit (SSU) processome, first precursor of the small eukaryotic ribosomal subunit. During the assembly of the SSU processome in the nucleolus, many ribosome biogenesis factors, an RNA chaperone and ribosomal proteins associate with the nascent pre-rRNA and work in concert to generate RNA folding, modifications, rearrangements and cleavage as well as targeted degradation of pre-ribosomal RNA by the RNA exosome. Involved in neuronal-lineage cell proliferation. The chain is HEAT repeat-containing protein 1 from Homo sapiens (Human).